The following is a 172-amino-acid chain: Ribosome maturation factor RimM (172 aa).

Residues 94-167 (ENEFYLFQLK…FIKVELLPGM (74 aa)) form the PRC barrel domain.

Belongs to the RimM family. Binds ribosomal protein uS19.

Its subcellular location is the cytoplasm. Functionally, an accessory protein needed during the final step in the assembly of 30S ribosomal subunit, possibly for assembly of the head region. Essential for efficient processing of 16S rRNA. May be needed both before and after RbfA during the maturation of 16S rRNA. It has affinity for free ribosomal 30S subunits but not for 70S ribosomes. The chain is Ribosome maturation factor RimM from Carboxydothermus hydrogenoformans (strain ATCC BAA-161 / DSM 6008 / Z-2901).